Reading from the N-terminus, the 244-residue chain is Na(+)-translocating NADH-quinone reductase subunit E (244 aa).

6 helical membrane passes run 11–31 (LLGI…TFLG), 47–67 (GLGM…WLIH), 90–110 (FLEL…LELL), 123–143 (GIFL…LFGI), 153–173 (VVFS…FATI), and 189–209 (MGIS…LTGI).

It belongs to the NqrDE/RnfAE family. In terms of assembly, composed of six subunits; NqrA, NqrB, NqrC, NqrD, NqrE and NqrF.

It is found in the cell inner membrane. The enzyme catalyses a ubiquinone + n Na(+)(in) + NADH + H(+) = a ubiquinol + n Na(+)(out) + NAD(+). Its function is as follows. NQR complex catalyzes the reduction of ubiquinone-1 to ubiquinol by two successive reactions, coupled with the transport of Na(+) ions from the cytoplasm to the periplasm. NqrA to NqrE are probably involved in the second step, the conversion of ubisemiquinone to ubiquinol. The sequence is that of Na(+)-translocating NADH-quinone reductase subunit E from Chlamydia muridarum (strain MoPn / Nigg).